The following is a 396-amino-acid chain: Serine/threonine-protein kinase GRIK1 (396 aa).

Residues E22–S65 form a disordered region. Residues G48 to E60 are compositionally biased toward acidic residues. Residues F108–I369 enclose the Protein kinase domain. ATP contacts are provided by residues I114–V122 and K137. T154 bears the Phosphothreonine; by autocatalysis mark. Catalysis depends on D239, which acts as the Proton acceptor. S261 carries the phosphoserine; by KIN10 modification.

It belongs to the protein kinase superfamily. Ser/Thr protein kinase family. Associates with the SNF1-related protein kinase (SnRK) complex. Interacts with AL1, a geminivirus (TGMV) protein essential for viral replication. Expressed in shoot apical meristem, leaf primordium and emerging petiole (at protein level).

Its subcellular location is the cytoplasm. It localises to the nucleus. It carries out the reaction L-seryl-[protein] + ATP = O-phospho-L-seryl-[protein] + ADP + H(+). The catalysed reaction is L-threonyl-[protein] + ATP = O-phospho-L-threonyl-[protein] + ADP + H(+). With respect to regulation, activated when autophosphorylated at Thr-154 and inactivated when phosphorylated at Ser-261 by SnRK1.1/KIN10. Activates SnRK1.1/KIN10 and SnRK1.2/KIN11 by phosphorylation of their activation-loop 'Thr-198' and 'Thr-176', respectively. Required for the regulation by SnRK1 kinases of the transcription of a large set of genes, the modification the activity of metabolic enzymes, and the control of various nutrient-responsive cellular developmental processes. In Arabidopsis thaliana (Mouse-ear cress), this protein is Serine/threonine-protein kinase GRIK1 (GRIK1).